We begin with the raw amino-acid sequence, 431 residues long: Maintenance of mitochondrial morphology protein 1 (431 aa).

Residues 1–103 (MVSALEVKSI…QLISWSFAQG (103 aa)) lie on the Lumenal side of the membrane. Residues 104–124 (LIIGQLSVVIFLIFFVKFFIF) form a helical membrane-spanning segment. Topologically, residues 125-431 (TDASSKMDNP…EDESSKTPHS (307 aa)) are cytoplasmic. The 213-residue stretch at 192-404 (SAESLDWFNV…EPRFQSVKLP (213 aa)) folds into the SMP-LTD domain. The interval 412–431 (NTREEVIHKTEDESSKTPHS) is disordered.

This sequence belongs to the MMM1 family. In terms of assembly, homodimer. Component of the ER-mitochondria encounter structure (ERMES) or MDM complex, composed of MMM1, MDM10, MDM12 and MDM34. An MMM1 homodimer associates with one molecule of MDM12 on each side in a pairwise head-to-tail manner, and the SMP-LTD domains of MMM1 and MDM12 generate a continuous hydrophobic tunnel for phospholipid trafficking.

The protein resides in the endoplasmic reticulum membrane. Component of the ERMES/MDM complex, which serves as a molecular tether to connect the endoplasmic reticulum (ER) and mitochondria. Components of this complex are involved in the control of mitochondrial shape and protein biogenesis, and function in nonvesicular lipid trafficking between the ER and mitochondria. The MDM12-MMM1 subcomplex functions in the major beta-barrel assembly pathway that is responsible for biogenesis of all outer membrane beta-barrel proteins, and acts in a late step after the SAM complex. The MDM10-MDM12-MMM1 subcomplex further acts in the TOM40-specific pathway after the action of the MDM12-MMM1 complex. Essential for establishing and maintaining the structure of mitochondria and maintenance of mtDNA nucleoids. The sequence is that of Maintenance of mitochondrial morphology protein 1 from Candida glabrata (strain ATCC 2001 / BCRC 20586 / JCM 3761 / NBRC 0622 / NRRL Y-65 / CBS 138) (Yeast).